The following is a 105-amino-acid chain: Protein FAM24A (105 aa).

A signal peptide spans 1-32 (MAKMFDLRTKIMIGIGSSLLVAAMVLLSVVFC).

The protein belongs to the FAM24 family.

It localises to the secreted. In Homo sapiens (Human), this protein is Protein FAM24A (FAM24A).